A 429-amino-acid chain; its full sequence is Citrate synthase, chromosomal (429 aa).

Active-site residues include H306 and D364.

The protein belongs to the citrate synthase family.

The catalysed reaction is oxaloacetate + acetyl-CoA + H2O = citrate + CoA + H(+). The protein operates within carbohydrate metabolism; tricarboxylic acid cycle; isocitrate from oxaloacetate: step 1/2. The sequence is that of Citrate synthase, chromosomal (ccsA) from Rhizobium tropici.